The following is a 340-amino-acid chain: Ephrin-B3 (340 aa).

A signal peptide spans 1–27 (MGAPHFGPGGVQVGALLLLGFAGLVSG). The region spanning 28–167 (LSLEPVYWNS…TRGMKVLLRV (140 aa)) is the Ephrin RBD domain. At 28–227 (LSLEPVYWNS…GPLPPPSMPA (200 aa)) the chain is on the extracellular side. 2 disulfides stabilise this stretch: Cys-62–Cys-104 and Cys-92–Cys-156. The segment at 168-227 (GQSPRGGAVPRKPVSEMPMERDRGAAHSAEPGRDTIPGDPSSNATSRGAEGPLPPPSMPA) is disordered. The span at 185–200 (PMERDRGAAHSAEPGR) shows a compositional bias: basic and acidic residues. A glycan (N-linked (GlcNAc...) asparagine) is linked at Asn-210. Residues 228–248 (VAGAAGGMALLLLGVAGAGGA) traverse the membrane as a helical segment. Topologically, residues 249 to 340 (MCWRRRRAKP…QSPPNIYYKV (92 aa)) are cytoplasmic. A disordered region spans residues 254–300 (RRAKPSESRHPGPGSFGRGGSLGLGGGGGMGPREAEPGELGIALRGG). Residues 267-284 (GSFGRGGSLGLGGGGGMG) are compositionally biased toward gly residues. Arg-271 is modified (omega-N-methylarginine). Ser-274 carries the phosphoserine modification. Positions 338–340 (YKV) match the PDZ-binding motif.

The protein belongs to the ephrin family. As to quaternary structure, interacts with GRIP1 and GRIP2. In terms of tissue distribution, expressed on lateral floor plate cells, specifically on commissural axon segments that have passed through the floor plate. Expressed in cells of the retinal ganglion cell layer during retinal axon guidance to the optic disk. Expressed in myogenic progenitor cells.

It is found in the membrane. Functionally, cell surface transmembrane ligand for Eph receptors, a family of receptor tyrosine kinases which are crucial for migration, repulsion and adhesion during neuronal, vascular and epithelial development. Binds promiscuously Eph receptors residing on adjacent cells, leading to contact-dependent bidirectional signaling into neighboring cells. The signaling pathway downstream of the receptor is referred to as forward signaling while the signaling pathway downstream of the ephrin ligand is referred to as reverse signaling. May play a pivotal role in forebrain function. Binds to, and induce the collapse of, commissural axons/growth cones in vitro. May play a role in constraining the orientation of longitudinally projecting axons. The protein is Ephrin-B3 (Efnb3) of Mus musculus (Mouse).